A 306-amino-acid polypeptide reads, in one-letter code: Protein YIPF1 (306 aa).

Over 1–119 (MAAVDDLQFE…VRLYIRSNPD (119 aa)) the chain is Cytoplasmic. The tract at residues 14 to 62 (NAATSLTANPDATTVNIEDPGETPKHQSGSPRGSGREEDDELLGNDDSD) is disordered. Positions 15–29 (AATSLTANPDATTVN) are enriched in polar residues. Residues 50–59 (EEDDELLGND) are compositionally biased toward acidic residues. The helical transmembrane segment at 120–140 (LYGPFWICATLVFAIAISGNL) threads the bilayer. Topologically, residues 141–162 (SNFLIHLGEKTYRYVPEFRKVS) are lumenal. The helical transmembrane segment at 163–183 (IAATTIYAYAWLVPLALWGFL) threads the bilayer. At 184–200 (MWRNSKVMNIVSYSFLE) the chain is on the cytoplasmic side. A helical transmembrane segment spans residues 201 to 221 (IVCVYGYSLFIYIPTAILWII). Residues 222–227 (PQKAVR) are Lumenal-facing. The helical transmembrane segment at 228 to 248 (WILVMIALGISGSVLAMTFWP) threads the bilayer. At 249 to 256 (AVREDNRR) the chain is on the cytoplasmic side. A helical transmembrane segment spans residues 257–277 (VALATIVTIVLLHMLLSVGCL). The Lumenal portion of the chain corresponds to 278 to 306 (AYFFDAPEMDHLPTTTATPNQTVAAAKSS). N-linked (GlcNAc...) asparagine glycosylation is present at asparagine 297.

The protein belongs to the YIP1 family. As to quaternary structure, interacts with YIPF6; this interaction may stabilize YIPF1. May also form a ternary complex with YIPF2 and YIPF6.

The protein localises to the golgi apparatus. It localises to the cis-Golgi network membrane. The protein resides in the trans-Golgi network membrane. Its subcellular location is the late endosome membrane. The sequence is that of Protein YIPF1 (YIPF1) from Pongo abelii (Sumatran orangutan).